Here is a 565-residue protein sequence, read N- to C-terminus: Adenine deaminase (565 aa).

It belongs to the metallo-dependent hydrolases superfamily. Adenine deaminase family. Requires Mn(2+) as cofactor.

It catalyses the reaction adenine + H2O + H(+) = hypoxanthine + NH4(+). The protein is Adenine deaminase of Gluconobacter oxydans (strain 621H) (Gluconobacter suboxydans).